The chain runs to 328 residues: Probable tRNA pseudouridine synthase B (328 aa).

Aspartate 71 (nucleophile) is an active-site residue. One can recognise a PUA domain in the interval 238–313 (LPKIWVRDSA…LVARVDRVIM (76 aa)).

This sequence belongs to the pseudouridine synthase TruB family. Type 2 subfamily.

The enzyme catalyses uridine(55) in tRNA = pseudouridine(55) in tRNA. In terms of biological role, could be responsible for synthesis of pseudouridine from uracil-55 in the psi GC loop of transfer RNAs. The protein is Probable tRNA pseudouridine synthase B of Pyrobaculum islandicum (strain DSM 4184 / JCM 9189 / GEO3).